The chain runs to 141 residues: Oleosin 14.9 kDa (141 aa).

Positions 1–22 (MADQTRTHHEMISRDSTQEAHP) are enriched in basic and acidic residues. The disordered stretch occupies residues 1–24 (MADQTRTHHEMISRDSTQEAHPKA). Residues 1–29 (MADQTRTHHEMISRDSTQEAHPKARQMVK) are polar. Positions 30 to 141 (AATAVTAGGS…NIGVQHQQVS (112 aa)) are hydrophobic. Helical transmembrane passes span 38–58 (GSLL…LTVA), 60–80 (PLLV…ALII), and 81–101 (TGFL…SWLY).

It belongs to the oleosin family.

The protein resides in the lipid droplet. Its subcellular location is the membrane. Its function is as follows. May have a structural role to stabilize the lipid body during desiccation of the seed by preventing coalescence of the oil. Probably interacts with both lipid and phospholipid moieties of lipid bodies. May also provide recognition signals for specific lipase anchorage in lipolysis during seedling growth. This is Oleosin 14.9 kDa (OL3) from Arabidopsis thaliana (Mouse-ear cress).